We begin with the raw amino-acid sequence, 356 residues long: Phosphoribosyl pyrophosphate synthase-associated protein 1 (356 aa).

Met-1 bears the N-acetylmethionine mark. Phosphoserine occurs at positions 177 and 215.

This sequence belongs to the ribose-phosphate pyrophosphokinase family. Binds to PRPS1 and PRPS2.

Functionally, seems to play a negative regulatory role in 5-phosphoribose 1-diphosphate synthesis. The sequence is that of Phosphoribosyl pyrophosphate synthase-associated protein 1 (Prpsap1) from Mus musculus (Mouse).